Here is a 64-residue protein sequence, read N- to C-terminus: Long neurotoxin MS4 (64 aa).

Disulfide bonds link cysteine 3-cysteine 24, cysteine 6-cysteine 11, cysteine 17-cysteine 41, cysteine 45-cysteine 57, and cysteine 58-cysteine 63.

The protein belongs to the three-finger toxin family. Ancestral subfamily. As to expression, expressed by the venom gland.

The protein localises to the secreted. Functionally, produces peripheral paralysis by blocking neuromuscular transmission at the postsynaptic site. Weak inhibitor of the endogenous nicotinic acetylcholine receptors (nAChR) in the human rhabdomyosarcoma TE 671 cell line with an IC(50) of 690 mM. This neurotoxin is lethal to zebrafish by injection at the back of the dorsolateral region, but is not toxic to mice by intraperitoneal injection. This Micrurus surinamensis (Surinam coral snake) protein is Long neurotoxin MS4.